The chain runs to 981 residues: Transcription factor TAC1 (981 aa).

The segment covering 1 to 29 has biased composition (polar residues); the sequence is MDTSSSSGTHPSTFNNLTKQQELTGNDPN. The interval 1–33 is disordered; that stretch reads MDTSSSSGTHPSTFNNLTKQQELTGNDPNDTNR. Residues 40–68 constitute a DNA-binding region (zn(2)-C6 fungal-type); the sequence is CDSCRRKKIKCNGSYPCGNCIQAKNTSNC. Disordered regions lie at residues 74–106, 165–199, and 868–902; these read PVRKKLKPTKQDNKSTANSNGVSKRKYNDTFSG, HSNSSMFNNNSLSPTPSEDFNKSAFDSEEQQTSHS, and LRDNSTNHGQNNMNPSPTITNNTYNSNINTGSNST. Low complexity predominate over residues 165 to 177; the sequence is HSNSSMFNNNSLS. Residues 868-880 show a composition bias toward polar residues; the sequence is LRDNSTNHGQNNM. Over residues 881–902 the composition is skewed to low complexity; that stretch reads NPSPTITNNTYNSNINTGSNST.

Phosphorylated. Phosphorylation leads to hyperactivation.

Its subcellular location is the nucleus. Its activity is regulated as follows. Drugs such as farnesol and 1-dodecanol are able to hyperactivate TAC1 probably via phosphorylation by the Mediator complex. Its function is as follows. Transcriptional activator of drug-responsive genes including the ABC-type transporters CDR1 and CDR2, as well as HSP12 and RTA3. Binds the cis-acting regulatory drug-responsive elements (DREs) with the consensus sequence 5'-CGGAWATCGGATATTTTTTT-3' in the promoters of target genes. The chain is Transcription factor TAC1 from Candida albicans (strain SC5314 / ATCC MYA-2876) (Yeast).